The chain runs to 367 residues: CST complex subunit STN1 (367 aa).

Residues 56-154 constitute a DNA-binding region (OB); that stretch reads VEILGTVIGR…EIRVTTYYKV (99 aa). Winged helix-turn-helix (wHTH) regions lie at residues 190–294 and 295–367; these read RAFS…YVTR and EDKE…YTAF.

The protein belongs to the STN1 family. As to quaternary structure, component of the CST complex, composed of TEN1, CTC1 and STN1. Interacts with TEN1 and CTC1; the interaction is direct. Interacts with ACD/TPP1.

The protein localises to the nucleus. The protein resides in the chromosome. It is found in the telomere. In terms of biological role, component of the CST complex, a complex that binds to single-stranded DNA and is required to protect telomeres from DNA degradation. The CST complex binds single-stranded DNA with high affinity in a sequence-independent manner, while isolated subunits bind DNA with low affinity by themselves. In addition to telomere protection, the CST complex has probably a more general role in DNA metabolism at non-telomeric sites. The protein is CST complex subunit STN1 of Ailuropoda melanoleuca (Giant panda).